The following is a 344-amino-acid chain: Anthranilate phosphoribosyltransferase (344 aa).

Residues glycine 85, 88–89 (GD), threonine 93, 95–98 (NIST), 113–121 (KHGNRSVSS), and serine 125 each bind 5-phospho-alpha-D-ribose 1-diphosphate. Anthranilate is bound at residue glycine 85. Serine 97 is a Mg(2+) binding site. Residue asparagine 116 coordinates anthranilate. Arginine 171 contacts anthranilate. Mg(2+) contacts are provided by aspartate 229 and glutamate 230.

Belongs to the anthranilate phosphoribosyltransferase family. As to quaternary structure, homodimer. It depends on Mg(2+) as a cofactor.

The catalysed reaction is N-(5-phospho-beta-D-ribosyl)anthranilate + diphosphate = 5-phospho-alpha-D-ribose 1-diphosphate + anthranilate. It functions in the pathway amino-acid biosynthesis; L-tryptophan biosynthesis; L-tryptophan from chorismate: step 2/5. Functionally, catalyzes the transfer of the phosphoribosyl group of 5-phosphorylribose-1-pyrophosphate (PRPP) to anthranilate to yield N-(5'-phosphoribosyl)-anthranilate (PRA). The sequence is that of Anthranilate phosphoribosyltransferase from Shewanella amazonensis (strain ATCC BAA-1098 / SB2B).